The following is a 110-amino-acid chain: Large ribosomal subunit protein uL22 (110 aa).

Belongs to the universal ribosomal protein uL22 family. As to quaternary structure, part of the 50S ribosomal subunit.

In terms of biological role, this protein binds specifically to 23S rRNA; its binding is stimulated by other ribosomal proteins, e.g. L4, L17, and L20. It is important during the early stages of 50S assembly. It makes multiple contacts with different domains of the 23S rRNA in the assembled 50S subunit and ribosome. Its function is as follows. The globular domain of the protein is located near the polypeptide exit tunnel on the outside of the subunit, while an extended beta-hairpin is found that lines the wall of the exit tunnel in the center of the 70S ribosome. The polypeptide is Large ribosomal subunit protein uL22 (Syntrophus aciditrophicus (strain SB)).